A 107-amino-acid chain; its full sequence is uncharacterized protein (107 aa).

Residues phenylalanine 34–tyrosine 107 adopt a coiled-coil conformation.

This is an uncharacterized protein from Dictyostelium discoideum (Social amoeba).